Consider the following 341-residue polypeptide: Malate dehydrogenase 1, mitochondrial (341 aa).

The transit peptide at 1 to 22 (MFRSMLVRSSASAKQAVIRRSF) directs the protein to the mitochondrion. NAD(+) contacts are provided by residues 36 to 42 (GAAGGIG) and aspartate 62. Residues arginine 109 and arginine 115 each coordinate substrate. NAD(+) contacts are provided by residues asparagine 122 and 145-147 (ISN). Substrate is bound by residues asparagine 147 and arginine 181. Histidine 205 functions as the Proton acceptor in the catalytic mechanism. Methionine 256 lines the NAD(+) pocket.

It belongs to the LDH/MDH superfamily. MDH type 1 family. Homodimer. Post-translationally, forms intramolecular disulfide bonds. As to expression, expressed in rosette leaves.

Its subcellular location is the mitochondrion matrix. It carries out the reaction (S)-malate + NAD(+) = oxaloacetate + NADH + H(+). Negatively regulated by ATP. Not redox-regulated. The formation of intramolecular disulfide bonds does not alter enzymatic activity. In terms of biological role, catalyzes a reversible NAD-dependent dehydrogenase reaction involved in central metabolism and redox homeostasis between organelle compartments. Required for carbon dioxide and energy partitioning in leaves. May limit photorespiration during the dark phase. Its activity is essential to shuttle reductants out from the mitochondria to support the photorespiratory flux. Can convert 2-oxoglutarate to (S)-2-hydroxyglutarate in vitro. This chain is Malate dehydrogenase 1, mitochondrial, found in Arabidopsis thaliana (Mouse-ear cress).